A 589-amino-acid chain; its full sequence is UvrABC system protein C (589 aa).

In terms of domain architecture, GIY-YIG spans 10-87 (ESSGVYLMKK…IKKYSPKYNI (78 aa)). A UVR domain is found at 197–232 (SKLINELTALMNKASQDMDFEKSIIYREQIKELKSI).

Belongs to the UvrC family. As to quaternary structure, interacts with UvrB in an incision complex.

Its subcellular location is the cytoplasm. In terms of biological role, the UvrABC repair system catalyzes the recognition and processing of DNA lesions. UvrC both incises the 5' and 3' sides of the lesion. The N-terminal half is responsible for the 3' incision and the C-terminal half is responsible for the 5' incision. The polypeptide is UvrABC system protein C (Fusobacterium nucleatum subsp. nucleatum (strain ATCC 25586 / DSM 15643 / BCRC 10681 / CIP 101130 / JCM 8532 / KCTC 2640 / LMG 13131 / VPI 4355)).